Consider the following 129-residue polypeptide: Follitropin subunit beta (129 aa).

The signal sequence occupies residues 1-18 (MKSVQFCFLFCCWRATCC). Disulfide bonds link Cys-21/Cys-69, Cys-35/Cys-84, Cys-38/Cys-122, Cys-46/Cys-100, Cys-50/Cys-102, and Cys-105/Cys-112. N-linked (GlcNAc...) asparagine glycans are attached at residues Asn-25 and Asn-42.

The protein belongs to the glycoprotein hormones subunit beta family. Heterodimer. The active follitropin is a heterodimer composed of an alpha chain/CGA shared with other hormones and a unique beta chain/FSHB shown here.

The protein localises to the secreted. Its function is as follows. Together with the alpha chain CGA constitutes follitropin, the follicle-stimulating hormone, and provides its biological specificity to the hormone heterodimer. Binds FSHR, a G protein-coupled receptor, on target cells to activate downstream signaling pathways. Follitropin is involved in follicle development and spermatogenesis in reproductive organs. In Cervus nippon (Sika deer), this protein is Follitropin subunit beta (FSHB).